Consider the following 202-residue polypeptide: FMN reductase (NADH) RutF 1 (202 aa).

The disordered stretch occupies residues P168–A202. Residues P171–A196 are compositionally biased toward low complexity.

Belongs to the non-flavoprotein flavin reductase family. RutF subfamily.

It catalyses the reaction FMNH2 + NAD(+) = FMN + NADH + 2 H(+). In terms of biological role, catalyzes the reduction of FMN to FMNH2 which is used to reduce pyrimidine by RutA via the Rut pathway. The polypeptide is FMN reductase (NADH) RutF 1 (Methylorubrum extorquens (strain PA1) (Methylobacterium extorquens)).